A 1017-amino-acid chain; its full sequence is A-type ATP synthase subunit A (1017 aa).

One can recognise a DOD-type homing endonuclease domain in the interval 396 to 529; the sequence is FLGYLIADGT…FSYLLAKLGI (134 aa).

The protein belongs to the ATPase alpha/beta chains family. As to quaternary structure, has multiple subunits with at least A(3), B(3), C, D, E, F, H, I and proteolipid K(x). Post-translationally, this protein undergoes a protein self splicing that involves a post-translational excision of the VDE intervening region (intein) followed by peptide ligation.

It localises to the cell membrane. The catalysed reaction is ATP + H2O + 4 H(+)(in) = ADP + phosphate + 5 H(+)(out). Its function is as follows. Component of the A-type ATP synthase that produces ATP from ADP in the presence of a proton gradient across the membrane. The A chain is the catalytic subunit. In Pyrococcus abyssi (strain GE5 / Orsay), this protein is A-type ATP synthase subunit A.